A 460-amino-acid polypeptide reads, in one-letter code: Transcriptional regulatory protein UME1 (460 aa).

The NEE-box motif lies at 14-22; sequence NEEFKIWKK. WD repeat units lie at residues 233–271, 276–316, 339–379, and 411–451; these read PGIK…KPLW, SLDG…ALGD, FYSE…AIYN, and GENN…VLDG.

As to quaternary structure, component of the RPD3C(L) complex composed of at least ASH1, CTI6, DEP1, PHO23, RPD3, RXT2, RXT3, SAP30, SDS3, SIN3, UME1 and UME6. Component of the RPD3C(S) complex composed of at least EAF3, RCO1, RPD3, SIN3, and UME1. Interacts with RPD3.

It is found in the cytoplasm. It localises to the nucleus. Catalytic component of the RPD3 histone deacetylase complexes RPD3C(L) and RPD3C(S) responsible for the deacetylation of lysine residues on the N-terminal part of the core histones (H2A, H2B, H3 and H4). Histone deacetylation gives a tag for epigenetic repression and plays an important role in transcriptional regulation, cell cycle progression and developmental events. This chain is Transcriptional regulatory protein UME1 (UME1), found in Saccharomyces cerevisiae (strain ATCC 204508 / S288c) (Baker's yeast).